The following is a 478-amino-acid chain: Metalloendopeptidase OMA1, mitochondrial (478 aa).

Residues 134–164 are stress-sensor region; the sequence is LGRSIRKWWVALPANKKQLFREWSWRRRWHF. Residues 163–183 traverse the membrane as a helical segment; the sequence is HFLGAGTGLLFIASLFFFTHL. Residue H296 participates in Zn(2+) binding. Residue E297 is part of the active site. 2 residues coordinate Zn(2+): H300 and E361. C376 and C434 are disulfide-bonded.

It belongs to the peptidase M48 family. Homooligomer. Zn(2+) is required as a cofactor. In terms of processing, autocatalytically cleaved in response to mitochondrial depolarization both at the N-terminus and C-terminus to generate the short active form (S-OMA1). The S-OMA1 form is unstable. Post-translationally, may form a redox-dependent disulfide bond. Exists in a semi-oxidized state and is activated by prolonged hypoxia.

The protein resides in the mitochondrion inner membrane. Protease activity is activated upon autocatalytic cleavage in response to mitochondrial depolarization. Metalloprotease that is part of the quality control system in the inner membrane of mitochondria. Activated in response to various mitochondrial stress, leading to the proteolytic cleavage of target proteins, such as opa1 and dele1. Involved in the fusion of the mitochondrial inner membranes by mediating cleavage of opa1 at S1 position, generating the soluble opa1 (S-opa1), which cooperates with the membrane form (L-opa1) to coordinate the fusion of mitochondrial inner membranes. Following stress conditions that induce loss of mitochondrial membrane potential, mediates cleavage of opa1, leading to excess production of soluble opa1 (S-opa1) and negative regulation of mitochondrial fusion. Also acts as an activator of the integrated stress response (ISR): in response to mitochondrial stress, mediates cleavage of dele1 to generate the processed form of dele1 (S-DELE1), which translocates to the cytosol and activates eif2ak1/hri to trigger the ISR. Required for the stability of the respiratory supercomplexes. In Danio rerio (Zebrafish), this protein is Metalloendopeptidase OMA1, mitochondrial.